We begin with the raw amino-acid sequence, 335 residues long: Galactinol synthase 2 (335 aa).

Residue Lys-103 is part of the active site. 3 residues coordinate Mn(2+): Asp-119, Asp-121, and His-257.

Belongs to the glycosyltransferase 8 family. Galactosyltransferase subfamily. It depends on a divalent metal cation as a cofactor. Accumulates in mature seeds.

It is found in the cytoplasm. It catalyses the reaction myo-inositol + UDP-alpha-D-galactose = alpha-D-galactosyl-(1-&gt;3)-1D-myo-inositol + UDP + H(+). In terms of biological role, galactinol synthase involved in the biosynthesis of raffinose family oligosaccharides (RFOs) that function as osmoprotectants. Promotes stress tolerance of factors such as drought, chilling, salinity and methylviologen (MV), a superoxide radical generating drug, by mediating an increase in levels of the endogenous osmoprotective compounds, galactinol and raffinose. The sequence is that of Galactinol synthase 2 (GOLS2) from Arabidopsis thaliana (Mouse-ear cress).